Reading from the N-terminus, the 516-residue chain is L-amino-acid oxidase (516 aa).

Residues 1-18 (MNVFFMFSLLFLAALGSC) form the signal peptide. A disulfide bridge links C28 with C189. FAD-binding positions include 61–62 (MA), 81–82 (EA), R89, and 103–106 (GPMR). The substrate site is built by R106 and H239. V279 provides a ligand contact to FAD. Residues C349 and C430 are joined by a disulfide bond. N379 carries N-linked (GlcNAc...) asparagine glycosylation. Substrate is bound at residue Y390. FAD contacts are provided by residues E475 and 482–487 (GWIDST). A substrate-binding site is contributed by 482-483 (GW).

The protein belongs to the flavin monoamine oxidase family. FIG1 subfamily. Homodimer; non-covalently linked. It depends on FAD as a cofactor. Expressed by the venom gland.

The protein resides in the secreted. It carries out the reaction an L-alpha-amino acid + O2 + H2O = a 2-oxocarboxylate + H2O2 + NH4(+). Catalyzes an oxidative deamination of predominantly hydrophobic and aromatic L-amino acids, thus producing hydrogen peroxide that may contribute to the diverse toxic effects of this enzyme. Exhibits diverse biological activities, such as hemolysis, edema, hemorrhage, apoptosis, antibacterial and antiparasitic activities, as well as regulation of platelet aggregation. Effects of snake L-amino oxidases on platelets are controversial, since they either induce aggregation or inhibit agonist-induced aggregation. These different effects are probably due to different experimental conditions. The polypeptide is L-amino-acid oxidase (Crotalus adamanteus (Eastern diamondback rattlesnake)).